Reading from the N-terminus, the 285-residue chain is MKGQIVRIIAGFYDVVDLKNRKLYPLLRGSGLLRLNETSPIVGDFVDFEEKGFIKKIYERKNQLIRPKVANIDQALVFISIREPNFSSLLLDKFLLVIEAKNIPVILLVTKIDLDSNFENLLLDYQKMNYNIFFINNKKNEIPVELKLELEKKLNFVIGQTGVGKTSFINNFLDKKFAIQEISQTLNRGKHTTRVVQIIEKENFRIIDSPGFSSFSYSEISKNEIRNAFKIFKKFSSDCKFRSCFHFQEKTDQCAIKRALKDGKIPENRYKNYLYFLGKYEKKNY.

Positions K61 to F215 constitute a CP-type G domain. Residues T110–D113 and G159–S167 contribute to the GTP site. Positions 239, 244, 246, and 254 each coordinate Zn(2+).

This sequence belongs to the TRAFAC class YlqF/YawG GTPase family. RsgA subfamily. As to quaternary structure, monomer. Associates with 30S ribosomal subunit, binds 16S rRNA. Zn(2+) is required as a cofactor.

The protein localises to the cytoplasm. In terms of biological role, one of several proteins that assist in the late maturation steps of the functional core of the 30S ribosomal subunit. Helps release RbfA from mature subunits. May play a role in the assembly of ribosomal proteins into the subunit. Circularly permuted GTPase that catalyzes slow GTP hydrolysis, GTPase activity is stimulated by the 30S ribosomal subunit. In Mesomycoplasma hyopneumoniae (strain 7448) (Mycoplasma hyopneumoniae), this protein is Small ribosomal subunit biogenesis GTPase RsgA.